Reading from the N-terminus, the 689-residue chain is Glycine--tRNA ligase beta subunit (689 aa).

The protein belongs to the class-II aminoacyl-tRNA synthetase family. As to quaternary structure, tetramer of two alpha and two beta subunits.

It is found in the cytoplasm. The enzyme catalyses tRNA(Gly) + glycine + ATP = glycyl-tRNA(Gly) + AMP + diphosphate. This chain is Glycine--tRNA ligase beta subunit, found in Aeromonas salmonicida (strain A449).